The sequence spans 188 residues: Protein SSX3 (188 aa).

The KRAB-related domain maps to 20 to 83 (KIQKAFDDIA…KRVTDFQGND (64 aa)). Residues 113 to 162 (PKKPAEEGNVSKEVPEASGPQNDGKQLCPPGKPTTSEKINMISGPKRGEH) form a disordered region. Residues 115–127 (KPAEEGNVSKEVP) show a composition bias toward basic and acidic residues. Position 123 is a phosphoserine (Ser123).

Belongs to the SSX family. As to quaternary structure, interacts with SSX2IP.

In terms of biological role, could act as a modulator of transcription. The protein is Protein SSX3 (SSX3) of Homo sapiens (Human).